Here is a 41-residue protein sequence, read N- to C-terminus: Photosystem I reaction center subunit VIII (41 aa).

The helical transmembrane segment at 12–32 threads the bilayer; the sequence is WIMIPVTCWLFPVVVMGLLFI.

It belongs to the PsaI family.

The protein resides in the cellular thylakoid membrane. Its function is as follows. May help in the organization of the PsaL subunit. In Cyanothece sp. (strain PCC 7425 / ATCC 29141), this protein is Photosystem I reaction center subunit VIII.